A 525-amino-acid chain; its full sequence is Chromosomal replication initiator protein DnaA (525 aa).

The segment at 1 to 71 is domain I, interacts with DnaA modulators; it reads MNDFWQHCSA…SDLAREFWNT (71 aa). The domain II stretch occupies residues 71–188; it reads TPIEVQFVLD…GEADSMYERS (118 aa). The disordered stretch occupies residues 162–182; that stretch reads AGRRTWRPGPGAAPANGGEAD. Positions 169 to 181 are enriched in low complexity; the sequence is PGPGAAPANGGEA. The domain III, AAA+ region stretch occupies residues 189-405; that stretch reads KLNPVLTFDN…GALRKILAYS (217 aa). The ATP site is built by Gly-233, Gly-235, Lys-236, and Thr-237. Positions 406 to 525 are domain IV, binds dsDNA; it reads KFHGREISIE…LHVLEQTLKG (120 aa).

The protein belongs to the DnaA family. As to quaternary structure, oligomerizes as a right-handed, spiral filament on DNA at oriC.

Its subcellular location is the cytoplasm. Plays an essential role in the initiation and regulation of chromosomal replication. ATP-DnaA binds to the origin of replication (oriC) to initiate formation of the DNA replication initiation complex once per cell cycle. Binds the DnaA box (a 9 base pair repeat at the origin) and separates the double-stranded (ds)DNA. Forms a right-handed helical filament on oriC DNA; dsDNA binds to the exterior of the filament while single-stranded (ss)DNA is stabiized in the filament's interior. The ATP-DnaA-oriC complex binds and stabilizes one strand of the AT-rich DNA unwinding element (DUE), permitting loading of DNA polymerase. After initiation quickly degrades to an ADP-DnaA complex that is not apt for DNA replication. Binds acidic phospholipids. The chain is Chromosomal replication initiator protein DnaA from Burkholderia cenocepacia (strain HI2424).